The sequence spans 223 residues: Proteinase inhibitor type-2 TR8 (223 aa).

An N-terminal signal peptide occupies residues 1–24 (MAIYKVALLLLFGMILLASDFEHA). A run of 3 repeats spans residues 24–81 (AKAC…EWVS), 88–145 (KKAC…EWVS), and 152–209 (EKDC…EWVS). Disulfide bonds link Cys-27-Cys-120, Cys-31-Cys-116, Cys-40-Cys-126, Cys-52-Cys-95, Cys-55-Cys-73, Cys-56-Cys-91, Cys-62-Cys-104, and Cys-119-Cys-137.

The protein belongs to the protease inhibitor I20 (potato type II proteinase inhibitor) family.

The chain is Proteinase inhibitor type-2 TR8 (ARPI) from Solanum lycopersicum (Tomato).